A 355-amino-acid polypeptide reads, in one-letter code: Protein RecA (355 aa).

72-79 (GPESSGKT) is a binding site for ATP.

This sequence belongs to the RecA family.

It localises to the cytoplasm. Functionally, can catalyze the hydrolysis of ATP in the presence of single-stranded DNA, the ATP-dependent uptake of single-stranded DNA by duplex DNA, and the ATP-dependent hybridization of homologous single-stranded DNAs. It interacts with LexA causing its activation and leading to its autocatalytic cleavage. The chain is Protein RecA from Wolbachia sp. subsp. Drosophila simulans (strain wRi).